The sequence spans 205 residues: Venom allergen 5 (205 aa).

Intrachain disulfides connect C4/C16, C8/C104, C28/C96, and C171/C188. An SCP domain is found at 47–190; sequence VNEHNRFRQK…MQHHYLICNY (144 aa).

This sequence belongs to the CRISP family. Venom allergen 5-like subfamily. As to expression, expressed by the venom gland.

It is found in the secreted. In Polistes fuscatus (Paper wasp), this protein is Venom allergen 5.